The sequence spans 241 residues: Chaperone protein HifB (241 aa).

Positions 1–27 (MGKTMFKKTLLFFTALFFAALCAFSAN) are cleaved as a signal peptide.

It belongs to the periplasmic pilus chaperone family.

The protein localises to the periplasm. Its function is as follows. Mediates assembly of pili by forming soluble multimeric complexes with pili subunits as an intermediate step in the assembly process. This protein is involved in type B pili (HifA) assembly. The sequence is that of Chaperone protein HifB (hifB) from Haemophilus influenzae.